The following is a 330-amino-acid chain: Ketol-acid reductoisomerase (NADP(+)) (330 aa).

The region spanning 1-182 (MKKVYYDQDA…GCTRAGVFET (182 aa)) is the KARI N-terminal Rossmann domain. NADP(+)-binding positions include 25–28 (YGSQ), serine 51, serine 53, and 83–86 (DQIQ). Residue histidine 108 is part of the active site. Position 134 (glycine 134) interacts with NADP(+). The region spanning 183-328 (TFKEETETDL…AELRQMMPWL (146 aa)) is the KARI C-terminal knotted domain. Residues aspartate 191, glutamate 195, glutamate 227, and glutamate 231 each coordinate Mg(2+). A substrate-binding site is contributed by serine 252.

It belongs to the ketol-acid reductoisomerase family. Mg(2+) is required as a cofactor.

It catalyses the reaction (2R)-2,3-dihydroxy-3-methylbutanoate + NADP(+) = (2S)-2-acetolactate + NADPH + H(+). It carries out the reaction (2R,3R)-2,3-dihydroxy-3-methylpentanoate + NADP(+) = (S)-2-ethyl-2-hydroxy-3-oxobutanoate + NADPH + H(+). It functions in the pathway amino-acid biosynthesis; L-isoleucine biosynthesis; L-isoleucine from 2-oxobutanoate: step 2/4. Its pathway is amino-acid biosynthesis; L-valine biosynthesis; L-valine from pyruvate: step 2/4. Involved in the biosynthesis of branched-chain amino acids (BCAA). Catalyzes an alkyl-migration followed by a ketol-acid reduction of (S)-2-acetolactate (S2AL) to yield (R)-2,3-dihydroxy-isovalerate. In the isomerase reaction, S2AL is rearranged via a Mg-dependent methyl migration to produce 3-hydroxy-3-methyl-2-ketobutyrate (HMKB). In the reductase reaction, this 2-ketoacid undergoes a metal-dependent reduction by NADPH to yield (R)-2,3-dihydroxy-isovalerate. The polypeptide is Ketol-acid reductoisomerase (NADP(+)) (Carboxydothermus hydrogenoformans (strain ATCC BAA-161 / DSM 6008 / Z-2901)).